The sequence spans 430 residues: Glutamate-1-semialdehyde 2,1-aminomutase (430 aa).

Residue Lys267 is modified to N6-(pyridoxal phosphate)lysine.

Belongs to the class-III pyridoxal-phosphate-dependent aminotransferase family. HemL subfamily. Homodimer. Requires pyridoxal 5'-phosphate as cofactor.

The protein resides in the cytoplasm. It catalyses the reaction (S)-4-amino-5-oxopentanoate = 5-aminolevulinate. It functions in the pathway porphyrin-containing compound metabolism; protoporphyrin-IX biosynthesis; 5-aminolevulinate from L-glutamyl-tRNA(Glu): step 2/2. In Anaeromyxobacter sp. (strain K), this protein is Glutamate-1-semialdehyde 2,1-aminomutase.